The chain runs to 322 residues: Ribosomal RNA small subunit methyltransferase H (322 aa).

S-adenosyl-L-methionine contacts are provided by residues 42 to 44, Asp-62, Phe-86, Asp-107, and Gln-114; that span reads GGH.

The protein belongs to the methyltransferase superfamily. RsmH family.

It localises to the cytoplasm. It catalyses the reaction cytidine(1402) in 16S rRNA + S-adenosyl-L-methionine = N(4)-methylcytidine(1402) in 16S rRNA + S-adenosyl-L-homocysteine + H(+). Specifically methylates the N4 position of cytidine in position 1402 (C1402) of 16S rRNA. The polypeptide is Ribosomal RNA small subunit methyltransferase H (Janthinobacterium sp. (strain Marseille) (Minibacterium massiliensis)).